Consider the following 317-residue polypeptide: Testis-specific Y-encoded protein 1 (317 aa).

Disordered regions lie at residues 1–39 and 91–118; these read MSRPFASAPARGHRQGQEERERRSEEGGSVPGPRTFQVV and DEEQEQRPSQELEEKTVEEQGQERPGGP. 2 stretches are compositionally biased toward basic and acidic residues: residues 15–26 and 95–112; these read QGQEERERRSEE and EQRPSQELEEKTVEEQGQ.

This sequence belongs to the nucleosome assembly protein (NAP) family. Post-translationally, phosphorylated. As to expression, testis. Probably in spermatogonia.

It is found in the cytoplasm. The protein localises to the nucleus. May be involved in sperm differentiation and proliferation. This Bos taurus (Bovine) protein is Testis-specific Y-encoded protein 1 (TSPY1).